A 153-amino-acid polypeptide reads, in one-letter code: Superoxide dismutase [Cu-Zn] (153 aa).

Histidine 46, histidine 48, and histidine 63 together coordinate Cu cation. Cysteine 57 and cysteine 146 form a disulfide bridge. The segment at 61–80 (GPHFNPFGKEHGAPEDENRH) is disordered. Residues histidine 63, histidine 71, histidine 80, and aspartate 83 each coordinate Zn(2+). The segment covering 68–80 (GKEHGAPEDENRH) has biased composition (basic and acidic residues). Residue histidine 120 participates in Cu cation binding. Over residues 124–136 (DDLGRSEHPESKK) the composition is skewed to basic and acidic residues. The interval 124–143 (DDLGRSEHPESKKTGNAGAR) is disordered. Residue arginine 143 coordinates substrate.

This sequence belongs to the Cu-Zn superoxide dismutase family. As to quaternary structure, homodimer. Requires Cu cation as cofactor. Zn(2+) is required as a cofactor.

The protein resides in the cytoplasm. The catalysed reaction is 2 superoxide + 2 H(+) = H2O2 + O2. Functionally, destroys radicals which are normally produced within the cells and which are toxic to biological systems. In Aspergillus flavus, this protein is Superoxide dismutase [Cu-Zn] (sodC).